We begin with the raw amino-acid sequence, 710 residues long: Aminopeptidase P2 (710 aa).

The N-terminal 79 residues, 1-79 (MIPLTLSSPS…IRKAQTKVVV (79 aa)), are a transit peptide targeting the chloroplast. Residues R147 and H486 each coordinate a peptide. 3 residues coordinate Mn(2+): D506, D517, and H580. Positions 580, 589, and 614 each coordinate a peptide. Mn(2+)-binding residues include E614 and E628.

It belongs to the peptidase M24B family. In terms of assembly, homodimer. It depends on Mn(2+) as a cofactor.

The protein resides in the plastid. It is found in the chloroplast. The catalysed reaction is Release of any N-terminal amino acid, including proline, that is linked to proline, even from a dipeptide or tripeptide.. Catalyzes the removal of a penultimate prolyl residue from the N-termini of peptides, such as Arg-Pro-Pro. This Arabidopsis thaliana (Mouse-ear cress) protein is Aminopeptidase P2.